The following is a 120-amino-acid chain: uncharacterized protein (120 aa).

This is an uncharacterized protein from Saccharomyces cerevisiae (strain ATCC 204508 / S288c) (Baker's yeast).